Consider the following 216-residue polypeptide: Adenylate kinase (216 aa).

10-15 (GAGKGT) is an ATP binding site. Residues 30 to 59 (STGDIFRKNISNKTPLGMEAKSYMDKGQLV) form an NMP region. Residues Thr31, Arg36, 57–59 (QLV), 85–88 (GFPR), and Gln92 contribute to the AMP site. The segment at 126–163 (GRRVCGECGASYHIKFITPKTEGVCDLCGGKLVQRKDD) is LID. ATP is bound at residue Arg127. Zn(2+) is bound by residues Cys130 and Cys133. 136-137 (SY) contacts ATP. Zn(2+)-binding residues include Cys150 and Cys153. Positions 160 and 171 each coordinate AMP. Lys199 provides a ligand contact to ATP.

Belongs to the adenylate kinase family. In terms of assembly, monomer.

It localises to the cytoplasm. It carries out the reaction AMP + ATP = 2 ADP. The protein operates within purine metabolism; AMP biosynthesis via salvage pathway; AMP from ADP: step 1/1. Its function is as follows. Catalyzes the reversible transfer of the terminal phosphate group between ATP and AMP. Plays an important role in cellular energy homeostasis and in adenine nucleotide metabolism. The sequence is that of Adenylate kinase from Clostridium tetani (strain Massachusetts / E88).